The following is a 468-amino-acid chain: Pituitary adenylate cyclase-activating polypeptide type I receptor (468 aa).

A signal peptide spans 1-20; that stretch reads MAGVVHVSLAALLLLPMAPA. Residues 21–152 are Extracellular-facing; sequence MHSDCIFKKE…TGDQDYYYLS (132 aa). 3 disulfides stabilise this stretch: Cys34-Cys63, Cys54-Cys118, and Cys77-Cys134. Asn48, Asn60, and Asn117 each carry an N-linked (GlcNAc...) asparagine glycan. Residues 125–139 form an important for ADCYAP1/PACAP ligand binding and specificity region; sequence EPFPHYFDACGFDEY. The helical transmembrane segment at 153–177 threads the bilayer; the sequence is VKALYTVGYSTSLVTLTTAMVILCR. Over 178–187 the chain is Cytoplasmic; sequence FRKLHCTRNF. The helical transmembrane segment at 188 to 208 threads the bilayer; the sequence is IHMNLFVSFMLRAISVFIKDW. Residues 209–223 are Extracellular-facing; the sequence is ILYAEQDSNHCFIST. The chain crosses the membrane as a helical span at residues 224 to 249; the sequence is VECKAVMVFFHYCVVSNYFWLFIEGL. Cys226 and Cys296 form a disulfide bridge. Residues 250–267 lie on the Cytoplasmic side of the membrane; it reads YLFTLLVETFFPERRYFY. Residues 268–290 traverse the membrane as a helical segment; it reads WYTIIGWGTPTVCVTVWATLRLY. At 291-302 the chain is on the extracellular side; that stretch reads FDDTGCWDMNDS. Asn300 carries an N-linked (GlcNAc...) asparagine glycan. The chain crosses the membrane as a helical span at residues 303–329; the sequence is TALWWVIKGPVVGSIMVNFVLFIGIIV. Residues 330–347 lie on the Cytoplasmic side of the membrane; sequence ILVQKLQSPDMGGNESSI. A helical transmembrane segment spans residues 348–374; the sequence is YLRLARSTLLLIPLFGIHYTVFAFSPE. A glycan (N-linked (GlcNAc...) asparagine) is linked at Asn375. Residues 375–379 are Extracellular-facing; the sequence is NVSKR. A helical transmembrane segment spans residues 380–403; it reads ERLVFELGLGSFQGFVVAVLYCFL. Over 404–468 the chain is Cytoplasmic; sequence NGEVQAEIKR…SGLPADNLAT (65 aa). Phosphoserine occurs at positions 434 and 447.

Belongs to the G-protein coupled receptor 2 family. Interacts with maxadilan, a vasodilator peptide from Lutzomyia longipalpis saliva; the interaction results in ADCYAP1R1 activation. Most abundant in the brain, low expression in the lung, liver, thymus, spleen, pancreas and placenta.

The protein resides in the cell membrane. Its activity is regulated as follows. Several synthetic peptides derived from maxadilan, a vasodilator peptide from Lutzomyia longipalpis saliva, act as antagonists for ADCYAP1R1. G protein-coupled receptor activated by the neuropeptide pituitary adenylate cyclase-activating polypeptide (ADCYAP1/PACAP). Binds both PACAP27 and PACAP38 bioactive peptides. Ligand binding causes a conformation change that triggers signaling via guanine nucleotide-binding proteins (G proteins) and modulates the activity of downstream effectors. Activates cAMP-dependent pathway. May regulate the release of adrenocorticotropin, luteinizing hormone, growth hormone, prolactin, epinephrine, and catecholamine. May play a role in spermatogenesis and sperm motility. Causes smooth muscle relaxation and secretion in the gastrointestinal tract. In Homo sapiens (Human), this protein is Pituitary adenylate cyclase-activating polypeptide type I receptor.